A 507-amino-acid chain; its full sequence is Histidine ammonia-lyase (507 aa).

A cross-link (5-imidazolinone (Ala-Gly)) is located at residues 141–143 (ASG). S142 carries the 2,3-didehydroalanine (Ser) modification.

It belongs to the PAL/histidase family. Post-translationally, contains an active site 4-methylidene-imidazol-5-one (MIO), which is formed autocatalytically by cyclization and dehydration of residues Ala-Ser-Gly.

It localises to the cytoplasm. The enzyme catalyses L-histidine = trans-urocanate + NH4(+). The protein operates within amino-acid degradation; L-histidine degradation into L-glutamate; N-formimidoyl-L-glutamate from L-histidine: step 1/3. This is Histidine ammonia-lyase from Cereibacter sphaeroides (strain KD131 / KCTC 12085) (Rhodobacter sphaeroides).